The primary structure comprises 796 residues: ER degradation-enhancing alpha-mannosidase-like protein 1 (796 aa).

The N-terminal stretch at 1 to 20 is a signal peptide; the sequence is MVCCLWVLLALLLHLDHVAC. N-linked (GlcNAc...) asparagine glycosylation occurs at Asn-86. Glu-372 functions as the Proton donor in the catalytic mechanism. Residue Thr-495 coordinates Ca(2+). N-linked (GlcNAc...) asparagine glycans are attached at residues Asn-517, Asn-672, and Asn-762.

Belongs to the glycosyl hydrolase 47 family. In terms of assembly, interacts with PDI1. Requires Ca(2+) as cofactor.

It localises to the endoplasmic reticulum lumen. It catalyses the reaction Hydrolysis of terminal, non-reducing alpha-D-mannose residues in alpha-D-mannosides.. It participates in protein modification; protein glycosylation. In terms of biological role, alpha-1,2-specific exomannosidase involved in endoplasmic reticulum-associated degradation (ERAD). Delivers misfolded glycoproteins to proteasomes. Forms a complex with PDI1 to process unfolded protein-bound Man8GlcNAc2 oligosaccharides to Man7GlcNAc2, promoting degradation in unfolded protein response. The polypeptide is ER degradation-enhancing alpha-mannosidase-like protein 1 (MNL1) (Saccharomyces cerevisiae (strain ATCC 204508 / S288c) (Baker's yeast)).